Reading from the N-terminus, the 319-residue chain is Pantothenate kinase (319 aa).

An ATP-binding site is contributed by 96 to 103; the sequence is GSVAVGKS.

This sequence belongs to the prokaryotic pantothenate kinase family.

It localises to the cytoplasm. It carries out the reaction (R)-pantothenate + ATP = (R)-4'-phosphopantothenate + ADP + H(+). Its pathway is cofactor biosynthesis; coenzyme A biosynthesis; CoA from (R)-pantothenate: step 1/5. In Bacillus velezensis (strain DSM 23117 / BGSC 10A6 / LMG 26770 / FZB42) (Bacillus amyloliquefaciens subsp. plantarum), this protein is Pantothenate kinase.